Consider the following 325-residue polypeptide: Oligopeptide transport system permease protein OppB (325 aa).

A run of 6 helical transmembrane segments spans residues 12–32, 102–122, 135–155, 189–208, 248–268, and 290–310; these read YLVL…LAFS, LVVG…WGAI, LALL…ILGA, LQHL…AGFS, IPMA…AVFV, and TNIV…AGLL. The 217-residue stretch at 95 to 311 folds into the ABC transmembrane type-1 domain; sequence IGVSLRLLVV…AVVLLAGLLS (217 aa).

Belongs to the binding-protein-dependent transport system permease family. OppBC subfamily. In terms of assembly, the complex is composed of an ATP-binding protein (OppD), two transmembrane proteins (OppB and OppC) and a solute-binding protein (OppA).

Its subcellular location is the cell inner membrane. Part of the ABC transporter complex OppABCD involved in the uptake of oligopeptides. Responsible for the translocation of the substrate across the membrane. The polypeptide is Oligopeptide transport system permease protein OppB (Mycobacterium bovis (strain ATCC BAA-935 / AF2122/97)).